A 189-amino-acid polypeptide reads, in one-letter code: Movement protein (189 aa).

Belongs to the tombusvirus/aureusvirus movement protein p22 family. In terms of assembly, interacts with host protein HFI22. Phosphorylated.

The protein resides in the host membrane. Transports viral genome to neighboring plant cells directly through plasmosdesmata, without any budding. The movement protein allows efficient cell to cell propagation, by bypassing the host cell wall barrier. Displays RNA-binding activity. The chain is Movement protein from Capsicum annuum (Capsicum pepper).